Here is a 596-residue protein sequence, read N- to C-terminus: MSRNDDEQARGSRWERETQDLSTQVEYLQEELALARRKLTETPGHVRLLEERLAATKAQVERMSEQNERLVATLKDAREQIVTLKEEIDRLAQPPSGYGVFIEAREDGTVDVFTGGRKMRVALSPSIEPESLRRGQEVLLNDALNVVESLGFERAGDVVTLKELIESDTGHPDRALVTSHADEERVVHLADSLTNAPLRAGDSLLVEPRSGYAYERIQKSEVEELVLEEVPDVDYESIGGLDGQIELIRDAVELPFLHADLFAEYELRPPKGVLLYGPPGCGKTLIAKAVANSLAKKVAEARGDDFTGGDRAKSYFLNIKGPELLNKYVGETERHIRLVFQRAREKASEGQPVIVFFDEMDSVFRTRGSGVSSDVENTIVPQLLSEIDGVEGLENVIVIGASNREDMIDPAILRPGRLDVKIKIERPDAESARDIFSKYVTTKLPLNEADLAEQGGSREACVQEMIQQAVERMYTETEENRFLEVTYADGDKEVLYFKDFNSGAMIQNIVDRAKKMAIKEFLNSQRKGLRLQHLLDACVDEFRENEDLPNTTNPDDWARISGKKGERIVYIRTLVSGKGDESGRSIDTVSNTGQYL.

Positions 12–94 (SRWERETQDL…KEEIDRLAQP (83 aa)) form a coiled coil. Position 280-285 (280-285 (GCGKTL)) interacts with ATP. The interval 595–596 (YL) is docks into pockets in the proteasome alpha-ring.

This sequence belongs to the AAA ATPase family. In terms of assembly, homohexamer. Assembles into a hexameric ring structure that caps the 20S proteasome core. Strongly interacts with the prokaryotic ubiquitin-like protein Pup through a hydrophobic interface; the interacting region of ARC lies in its N-terminal coiled-coil domain. There is one Pup binding site per ARC hexamer ring. Upon ATP-binding, the C-terminus of ARC interacts with the alpha-rings of the proteasome core, possibly by binding to the intersubunit pockets.

It participates in protein degradation; proteasomal Pup-dependent pathway. ATPase which is responsible for recognizing, binding, unfolding and translocation of pupylated proteins into the bacterial 20S proteasome core particle. May be essential for opening the gate of the 20S proteasome via an interaction with its C-terminus, thereby allowing substrate entry and access to the site of proteolysis. Thus, the C-termini of the proteasomal ATPase may function like a 'key in a lock' to induce gate opening and therefore regulate proteolysis. The polypeptide is Proteasome-associated ATPase (Stackebrandtia nassauensis (strain DSM 44728 / CIP 108903 / NRRL B-16338 / NBRC 102104 / LLR-40K-21)).